The sequence spans 387 residues: Queuine tRNA-ribosyltransferase (387 aa).

Residue Asp-105 is the Proton acceptor of the active site. Substrate is bound by residues 105–109, Asp-177, and Gly-248; that span reads DSGGF. The segment at 278 to 284 is RNA binding; the sequence is GIGDLPS. Asp-297 serves as the catalytic Nucleophile. The RNA binding; important for wobble base 34 recognition stretch occupies residues 302–306; it reads TRAAR. Zn(2+) is bound by residues Cys-335, Cys-337, Cys-340, and His-366.

This sequence belongs to the queuine tRNA-ribosyltransferase family. In terms of assembly, homodimer. Within each dimer, one monomer is responsible for RNA recognition and catalysis, while the other monomer binds to the replacement base PreQ1. It depends on Zn(2+) as a cofactor.

The enzyme catalyses 7-aminomethyl-7-carbaguanine + guanosine(34) in tRNA = 7-aminomethyl-7-carbaguanosine(34) in tRNA + guanine. It participates in tRNA modification; tRNA-queuosine biosynthesis. Functionally, catalyzes the base-exchange of a guanine (G) residue with the queuine precursor 7-aminomethyl-7-deazaguanine (PreQ1) at position 34 (anticodon wobble position) in tRNAs with GU(N) anticodons (tRNA-Asp, -Asn, -His and -Tyr). Catalysis occurs through a double-displacement mechanism. The nucleophile active site attacks the C1' of nucleotide 34 to detach the guanine base from the RNA, forming a covalent enzyme-RNA intermediate. The proton acceptor active site deprotonates the incoming PreQ1, allowing a nucleophilic attack on the C1' of the ribose to form the product. After dissociation, two additional enzymatic reactions on the tRNA convert PreQ1 to queuine (Q), resulting in the hypermodified nucleoside queuosine (7-(((4,5-cis-dihydroxy-2-cyclopenten-1-yl)amino)methyl)-7-deazaguanosine). The chain is Queuine tRNA-ribosyltransferase from Protochlamydia amoebophila (strain UWE25).